The following is a 120-amino-acid chain: NAD(P)H-quinone oxidoreductase subunit 3, chloroplastic (120 aa).

The next 3 helical transmembrane spans lie at 9–29, 64–84, and 88–108; these read IFWA…FISG, MFAL…PWAM, and VLGL…IVGL.

It belongs to the complex I subunit 3 family. In terms of assembly, NDH is composed of at least 16 different subunits, 5 of which are encoded in the nucleus.

It localises to the plastid. It is found in the chloroplast thylakoid membrane. It carries out the reaction a plastoquinone + NADH + (n+1) H(+)(in) = a plastoquinol + NAD(+) + n H(+)(out). The catalysed reaction is a plastoquinone + NADPH + (n+1) H(+)(in) = a plastoquinol + NADP(+) + n H(+)(out). NDH shuttles electrons from NAD(P)H:plastoquinone, via FMN and iron-sulfur (Fe-S) centers, to quinones in the photosynthetic chain and possibly in a chloroplast respiratory chain. The immediate electron acceptor for the enzyme in this species is believed to be plastoquinone. Couples the redox reaction to proton translocation, and thus conserves the redox energy in a proton gradient. The sequence is that of NAD(P)H-quinone oxidoreductase subunit 3, chloroplastic from Jasminum nudiflorum (Winter jasmine).